Reading from the N-terminus, the 151-residue chain is Small ribosomal subunit protein uS15z (151 aa).

It belongs to the universal ribosomal protein uS15 family.

The chain is Small ribosomal subunit protein uS15z (RPS13A) from Arabidopsis thaliana (Mouse-ear cress).